A 542-amino-acid chain; its full sequence is Chaperonin GroEL 1 (542 aa).

Residues 29–32, 86–90, Gly-415, 479–481, and Asp-495 each bind ATP; these read TIGP, DGTTT, and NAA.

This sequence belongs to the chaperonin (HSP60) family. Forms a cylinder of 14 subunits composed of two heptameric rings stacked back-to-back. Interacts with the co-chaperonin GroES.

The protein resides in the cytoplasm. It carries out the reaction ATP + H2O + a folded polypeptide = ADP + phosphate + an unfolded polypeptide.. Functionally, together with its co-chaperonin GroES, plays an essential role in assisting protein folding. The GroEL-GroES system forms a nano-cage that allows encapsulation of the non-native substrate proteins and provides a physical environment optimized to promote and accelerate protein folding. The protein is Chaperonin GroEL 1 of Streptomyces avermitilis (strain ATCC 31267 / DSM 46492 / JCM 5070 / NBRC 14893 / NCIMB 12804 / NRRL 8165 / MA-4680).